We begin with the raw amino-acid sequence, 37 residues long: Large ribosomal subunit protein bL36c (37 aa).

It belongs to the bacterial ribosomal protein bL36 family.

The protein localises to the plastid. This is Large ribosomal subunit protein bL36c from Helicosporidium sp. subsp. Simulium jonesii (Green alga).